The primary structure comprises 651 residues: Ion-translocating oxidoreductase complex subunit C (651 aa).

4Fe-4S ferredoxin-type domains lie at 368–398 and 408–437; these read EYAE…QQLY and KSEE…IQYF. Residues Cys-378, Cys-381, Cys-384, Cys-388, Cys-417, Cys-420, Cys-423, and Cys-427 each coordinate [4Fe-4S] cluster. Composition is skewed to basic and acidic residues over residues 465–477 and 485–513; these read QARM…ERKA and ARRE…KANE. Disordered regions lie at residues 465–565 and 583–624; these read QARM…QPTD and LAQA…DPKK. Composition is skewed to polar residues over residues 554 to 564 and 587 to 600; these read VENQEQQTQPT and NSTS…QTAE. A compositionally biased stretch (basic and acidic residues) spans 602–614; it reads EVEKTKSAVEKTQ.

This sequence belongs to the 4Fe4S bacterial-type ferredoxin family. RnfC subfamily. In terms of assembly, the complex is composed of six subunits: RnfA, RnfB, RnfC, RnfD, RnfE and RnfG. [4Fe-4S] cluster is required as a cofactor.

The protein localises to the cell inner membrane. Part of a membrane-bound complex that couples electron transfer with translocation of ions across the membrane. This Haemophilus influenzae (strain PittEE) protein is Ion-translocating oxidoreductase complex subunit C.